The sequence spans 100 residues: RxLR effector protein PITG_18683 (100 aa).

The N-terminal stretch at 1-22 (MRSFLYGILAFAVLARSSAVAA) is a signal peptide. The RxLR-dEER signature appears at 43 to 57 (RSLRVEAQEVIQSGR). A Calmodulin-binding motif motif is present at residues 78–82 (KPDIK).

This sequence belongs to the RxLR effector family. As to quaternary structure, interacts with the host calmodulin.

It localises to the secreted. It is found in the host cell. Its function is as follows. Secreted effector that associates with calmodulin to interfere with plant defense-associated calcium signaling in hosts. This chain is RxLR effector protein PITG_18683, found in Phytophthora infestans (strain T30-4) (Potato late blight agent).